Consider the following 305-residue polypeptide: Serine/threonine-protein phosphatase PP1-delta (305 aa).

The Mn(2+) site is built by Asp-62, His-64, Asp-90, and Asn-122. Catalysis depends on His-123, which acts as the Proton donor. Residues His-172 and His-247 each coordinate Mn(2+).

It belongs to the PPP phosphatase family. As to expression, expressed in male germline including spermatocytes, spermatids and spermatozoa.

It localises to the chromosome. It is found in the cell projection. The protein localises to the pseudopodium. Its subcellular location is the cytoplasm. It carries out the reaction O-phospho-L-seryl-[protein] + H2O = L-seryl-[protein] + phosphate. The enzyme catalyses O-phospho-L-threonyl-[protein] + H2O = L-threonyl-[protein] + phosphate. In terms of biological role, probable phosphatase which plays a redundant role with gsp-4 in spermatogenesis by regulating sister chromatid segregation during meiosis. In addition, involved in sperm motility by controlling the dynamic disassembly of major sperm proteins (MSP) in the spermatozoan pseudopodium. The polypeptide is Serine/threonine-protein phosphatase PP1-delta (Caenorhabditis elegans).